An 80-amino-acid chain; its full sequence is MAKSATIITFLFAALVLFAAFEAPTMVEAQKLCEKPSGTWSGVCGNSNACKNQCINLEGAKHGSCNYVFPAHKCICYVPC.

A signal peptide spans 1–29; that stretch reads MAKSATIITFLFAALVLFAAFEAPTMVEA. Gln30 is modified (pyrrolidone carboxylic acid). 4 disulfide bridges follow: Cys33/Cys80, Cys44/Cys65, Cys50/Cys74, and Cys54/Cys76.

This sequence belongs to the DEFL family.

The protein resides in the secreted. In terms of biological role, confers broad-spectrum resistance to pathogens. The protein is Defensin-like protein 17 (PDF1.2C) of Arabidopsis thaliana (Mouse-ear cress).